The sequence spans 270 residues: 4-hydroxy-tetrahydrodipicolinate reductase (270 aa).

NAD(+) is bound by residues 9–14 (GAGGRM) and Glu-35. Arg-36 is an NADP(+) binding site. NAD(+) is bound by residues 99–101 (GTT) and 123–126 (ASNF). The active-site Proton donor/acceptor is the His-156. His-157 contributes to the (S)-2,3,4,5-tetrahydrodipicolinate binding site. The active-site Proton donor is the Lys-160. (S)-2,3,4,5-tetrahydrodipicolinate is bound at residue 166–167 (GT).

This sequence belongs to the DapB family.

It is found in the cytoplasm. The catalysed reaction is (S)-2,3,4,5-tetrahydrodipicolinate + NAD(+) + H2O = (2S,4S)-4-hydroxy-2,3,4,5-tetrahydrodipicolinate + NADH + H(+). The enzyme catalyses (S)-2,3,4,5-tetrahydrodipicolinate + NADP(+) + H2O = (2S,4S)-4-hydroxy-2,3,4,5-tetrahydrodipicolinate + NADPH + H(+). The protein operates within amino-acid biosynthesis; L-lysine biosynthesis via DAP pathway; (S)-tetrahydrodipicolinate from L-aspartate: step 4/4. In terms of biological role, catalyzes the conversion of 4-hydroxy-tetrahydrodipicolinate (HTPA) to tetrahydrodipicolinate. In Pasteurella multocida (strain Pm70), this protein is 4-hydroxy-tetrahydrodipicolinate reductase.